A 285-amino-acid polypeptide reads, in one-letter code: MLIKNYRTQFVQALASIFDEKEIESFFYIILEAFHQLKRVDLVLSPDLKLDNIQLLQWETVLLQLKEQKPIQYILGETQFFGLPFYVNENTLIPRPETEELVEWIIKENLKISSLKNLKILDIGTGSGCIAISLAKNLPNASVFAIDVSDKALATAQKNAVLNEVDITFIEKNILQTEDLNQEFDIIVSNPPYVRNLEKKEIHKNVLEYEPHLALFVEDNDSLLFYRKITELATRNLSNNGQLYFEINQYLGKETVELLEKYNFKNTTLKKDIYGNDRMIKVNFR.

S-adenosyl-L-methionine-binding positions include 124–128 (GTGSG), D147, and N190. 190–193 (NPPY) lines the substrate pocket.

The protein belongs to the protein N5-glutamine methyltransferase family. PrmC subfamily.

The enzyme catalyses L-glutaminyl-[peptide chain release factor] + S-adenosyl-L-methionine = N(5)-methyl-L-glutaminyl-[peptide chain release factor] + S-adenosyl-L-homocysteine + H(+). In terms of biological role, methylates the class 1 translation termination release factors RF1/PrfA and RF2/PrfB on the glutamine residue of the universally conserved GGQ motif. In Flavobacterium psychrophilum (strain ATCC 49511 / DSM 21280 / CIP 103535 / JIP02/86), this protein is Release factor glutamine methyltransferase.